The chain runs to 126 residues: Aspartate 1-decarboxylase (126 aa).

Serine 25 serves as the catalytic Schiff-base intermediate with substrate; via pyruvic acid. Position 25 is a pyruvic acid (Ser) (serine 25). Threonine 57 contacts substrate. Catalysis depends on tyrosine 58, which acts as the Proton donor. 73–75 (GAA) provides a ligand contact to substrate.

The protein belongs to the PanD family. As to quaternary structure, heterooctamer of four alpha and four beta subunits. Pyruvate serves as cofactor. Post-translationally, is synthesized initially as an inactive proenzyme, which is activated by self-cleavage at a specific serine bond to produce a beta-subunit with a hydroxyl group at its C-terminus and an alpha-subunit with a pyruvoyl group at its N-terminus.

It is found in the cytoplasm. The enzyme catalyses L-aspartate + H(+) = beta-alanine + CO2. The protein operates within cofactor biosynthesis; (R)-pantothenate biosynthesis; beta-alanine from L-aspartate: step 1/1. Catalyzes the pyruvoyl-dependent decarboxylation of aspartate to produce beta-alanine. The polypeptide is Aspartate 1-decarboxylase (Photorhabdus laumondii subsp. laumondii (strain DSM 15139 / CIP 105565 / TT01) (Photorhabdus luminescens subsp. laumondii)).